A 539-amino-acid polypeptide reads, in one-letter code: Inosine-5'-monophosphate dehydrogenase (539 aa).

CBS domains are found at residues 140-196 and 200-257; these read IIVN…DMPI and MTRE…PRAC. NAD(+) contacts are provided by residues aspartate 292 and 343–345; that span reads GIG. K(+)-binding residues include glycine 345 and glycine 347. Residue serine 348 participates in IMP binding. Cysteine 350 contributes to the K(+) binding site. The active-site Thioimidate intermediate is cysteine 350. Residues 383–385, 406–407, and 430–434 contribute to the IMP site; these read DGG, GS, and YRGMG. Catalysis depends on arginine 446, which acts as the Proton acceptor. Residue glutamate 460 coordinates IMP. Glutamate 514 and histidine 516 together coordinate K(+). The interval 517–539 is disordered; the sequence is PHDIAITQEAPNYSPDVHSGDAG.

This sequence belongs to the IMPDH/GMPR family. As to quaternary structure, homotetramer. The cofactor is K(+).

It carries out the reaction IMP + NAD(+) + H2O = XMP + NADH + H(+). Its pathway is purine metabolism; XMP biosynthesis via de novo pathway; XMP from IMP: step 1/1. Its activity is regulated as follows. Mycophenolic acid (MPA) is a non-competitive inhibitor that prevents formation of the closed enzyme conformation by binding to the same site as the amobile flap. In contrast, mizoribine monophosphate (MZP) is a competitive inhibitor that induces the closed conformation. MPA is a potent inhibitor of mammalian IMPDHs but a poor inhibitor of the bacterial enzymes. MZP is a more potent inhibitor of bacterial IMPDH. In terms of biological role, catalyzes the conversion of inosine 5'-phosphate (IMP) to xanthosine 5'-phosphate (XMP), the first committed and rate-limiting step in the de novo synthesis of guanine nucleotides, and therefore plays an important role in the regulation of cell growth. This is Inosine-5'-monophosphate dehydrogenase from Rhodopirellula baltica (strain DSM 10527 / NCIMB 13988 / SH1).